A 1534-amino-acid polypeptide reads, in one-letter code: Alpha-2-macroglobulin homolog (1534 aa).

A signal peptide spans 1–38; the sequence is MDTQRFQSQFHWHLSFKFSGAIAACLSLSLVGTGLANA.

Belongs to the protease inhibitor I39 (alpha-2-macroglobulin) family. Bacterial alpha-2-macroglobulin subfamily.

The sequence is that of Alpha-2-macroglobulin homolog (yfaS) from Escherichia coli O157:H7.